Reading from the N-terminus, the 272-residue chain is Cyanophycinase (272 aa).

Active-site charge relay system residues include Ser-132, Glu-150, and His-174.

It belongs to the peptidase S51 family.

The catalysed reaction is [L-4-(L-arginin-2-N-yl)aspartate](n) + H2O = [L-4-(L-arginin-2-N-yl)aspartate](n-1) + L-4-(L-arginin-2-N-yl)aspartate. Functionally, exopeptidase that catalyzes the hydrolytic cleavage of multi-L-arginyl-poly-L-aspartic acid (cyanophycin; a water-insoluble reserve polymer) into aspartate-arginine dipeptides. The chain is Cyanophycinase (cphB) from Geminocystis herdmanii (strain PCC 6308) (Synechocystis sp. (strain PCC 6308)).